The primary structure comprises 400 residues: Elongation factor Tu (400 aa).

One can recognise a tr-type G domain in the interval K10 to E209. The segment at G19–T26 is G1. Position 19–26 (G19–T26) interacts with GTP. T26 is a Mg(2+) binding site. Residues G60 to N64 form a G2 region. Residues D81–G84 are G3. Residues D81–H85 and N136–D139 each bind GTP. A G4 region spans residues N136 to D139. Residues S174–L176 form a G5 region.

Belongs to the TRAFAC class translation factor GTPase superfamily. Classic translation factor GTPase family. EF-Tu/EF-1A subfamily. Monomer.

Its subcellular location is the cytoplasm. It catalyses the reaction GTP + H2O = GDP + phosphate + H(+). GTP hydrolase that promotes the GTP-dependent binding of aminoacyl-tRNA to the A-site of ribosomes during protein biosynthesis. The protein is Elongation factor Tu of Heliobacterium modesticaldum (strain ATCC 51547 / Ice1).